The following is a 387-amino-acid chain: Anhydro-N-acetylmuramic acid kinase (387 aa).

9 to 16 (GTSVDGID) is an ATP binding site.

This sequence belongs to the anhydro-N-acetylmuramic acid kinase family.

It catalyses the reaction 1,6-anhydro-N-acetyl-beta-muramate + ATP + H2O = N-acetyl-D-muramate 6-phosphate + ADP + H(+). It functions in the pathway amino-sugar metabolism; 1,6-anhydro-N-acetylmuramate degradation. It participates in cell wall biogenesis; peptidoglycan recycling. Functionally, catalyzes the specific phosphorylation of 1,6-anhydro-N-acetylmuramic acid (anhMurNAc) with the simultaneous cleavage of the 1,6-anhydro ring, generating MurNAc-6-P. Is required for the utilization of anhMurNAc either imported from the medium or derived from its own cell wall murein, and thus plays a role in cell wall recycling. The chain is Anhydro-N-acetylmuramic acid kinase from Synechocystis sp. (strain ATCC 27184 / PCC 6803 / Kazusa).